The primary structure comprises 66 residues: Large ribosomal subunit protein bL35 (66 aa).

It belongs to the bacterial ribosomal protein bL35 family.

This chain is Large ribosomal subunit protein bL35, found in Rhodopseudomonas palustris (strain BisB18).